We begin with the raw amino-acid sequence, 917 residues long: Protein translocase subunit SecA (917 aa).

ATP-binding positions include Gln87, Gly105–Thr109, and Asp501. Positions 901, 903, 912, and 913 each coordinate Zn(2+).

Belongs to the SecA family. In terms of assembly, monomer and homodimer. Part of the essential Sec protein translocation apparatus which comprises SecA, SecYEG and auxiliary proteins SecDF-YajC and YidC. It depends on Zn(2+) as a cofactor.

It localises to the cell inner membrane. The protein localises to the cytoplasm. It catalyses the reaction ATP + H2O + cellular proteinSide 1 = ADP + phosphate + cellular proteinSide 2.. Its function is as follows. Part of the Sec protein translocase complex. Interacts with the SecYEG preprotein conducting channel. Has a central role in coupling the hydrolysis of ATP to the transfer of proteins into and across the cell membrane, serving both as a receptor for the preprotein-SecB complex and as an ATP-driven molecular motor driving the stepwise translocation of polypeptide chains across the membrane. This is Protein translocase subunit SecA from Granulibacter bethesdensis (strain ATCC BAA-1260 / CGDNIH1).